Consider the following 81-residue polypeptide: Cytochrome c oxidase subunit 7B2, mitochondrial (81 aa).

A mitochondrion-targeting transit peptide spans 1–25; sequence MMFPLARNALSSLKIQSILQSMARH. At 26-33 the chain is on the mitochondrial matrix side; sequence SHVKHSPD. Residues 34–60 form a helical membrane-spanning segment; sequence FHDKYGNAVLASGTAFCVATWVFTATQ. The Mitochondrial intermembrane portion of the chain corresponds to 61-81; sequence IGIEWNLSPVGRVTPKEWKHQ.

It belongs to the cytochrome c oxidase VIIb family. In terms of assembly, component of the cytochrome c oxidase (complex IV, CIV), a multisubunit enzyme composed of 14 subunits. The complex is composed of a catalytic core of 3 subunits MT-CO1, MT-CO2 and MT-CO3, encoded in the mitochondrial DNA, and 11 supernumerary subunits COX4I, COX5A, COX5B, COX6A, COX6B, COX6C, COX7A, COX7B, COX7C, COX8 and NDUFA4, which are encoded in the nuclear genome. The complex exists as a monomer or a dimer and forms supercomplexes (SCs) in the inner mitochondrial membrane with NADH-ubiquinone oxidoreductase (complex I, CI) and ubiquinol-cytochrome c oxidoreductase (cytochrome b-c1 complex, complex III, CIII), resulting in different assemblies (supercomplex SCI(1)III(2)IV(1) and megacomplex MCI(2)III(2)IV(2)).

The protein resides in the mitochondrion inner membrane. Its pathway is energy metabolism; oxidative phosphorylation. Component of the cytochrome c oxidase, the last enzyme in the mitochondrial electron transport chain which drives oxidative phosphorylation. The respiratory chain contains 3 multisubunit complexes succinate dehydrogenase (complex II, CII), ubiquinol-cytochrome c oxidoreductase (cytochrome b-c1 complex, complex III, CIII) and cytochrome c oxidase (complex IV, CIV), that cooperate to transfer electrons derived from NADH and succinate to molecular oxygen, creating an electrochemical gradient over the inner membrane that drives transmembrane transport and the ATP synthase. Cytochrome c oxidase is the component of the respiratory chain that catalyzes the reduction of oxygen to water. Electrons originating from reduced cytochrome c in the intermembrane space (IMS) are transferred via the dinuclear copper A center (CU(A)) of subunit 2 and heme A of subunit 1 to the active site in subunit 1, a binuclear center (BNC) formed by heme A3 and copper B (CU(B)). The BNC reduces molecular oxygen to 2 water molecules using 4 electrons from cytochrome c in the IMS and 4 protons from the mitochondrial matrix. This Homo sapiens (Human) protein is Cytochrome c oxidase subunit 7B2, mitochondrial (COX7B2).